We begin with the raw amino-acid sequence, 254 residues long: O-antigen biosynthesis glycosyltransferase WbnJ (254 aa).

Belongs to the glycosyltransferase 2 family.

The enzyme catalyses an N-acetyl-alpha-D-galactosaminyl derivative + UDP-alpha-D-galactose = a beta-D-galactosyl-(1-&gt;3)-N-acetyl-alpha-D-galactosaminyl derivative + UDP + H(+). It carries out the reaction alpha-D-GalNAc-(1-&gt;3)-alpha-D-GalNAc-di-trans,octa-cis-undecaprenyl diphosphate + UDP-alpha-D-galactose = beta-D-Gal-(1-&gt;3)-alpha-D-GalNAc-(1-&gt;3)-alpha-D-GalNAc-di-trans,octa-cis-undecaprenyl diphosphate + UDP + H(+). The protein operates within bacterial outer membrane biogenesis; LPS O-antigen biosynthesis. Involved in the assembly of the O-repeating unit during O-antigen biosynthesis. The protein is O-antigen biosynthesis glycosyltransferase WbnJ of Escherichia coli.